Reading from the N-terminus, the 629-residue chain is Pescadillo homolog (629 aa).

Residues 321-414 form the BRCT domain; sequence RLRTLFKGLK…QLLPTNKYFI (94 aa). 3 disordered regions span residues 439-470, 488-568, and 598-629; these read KALL…ETVD, EYKK…MVKP, and IEAS…KLGK. 2 positions are modified to phosphoserine: serine 453 and serine 457. 2 stretches are compositionally biased toward acidic residues: residues 454–470 and 498–523; these read DEDS…ETVD and VNED…EELD. Positions 524-535 are enriched in basic and acidic residues; sequence EKSKRLQEEKQK. The span at 542-551 shows a compositional bias: basic residues; it reads KVHKVNKRQV. Composition is skewed to basic and acidic residues over residues 552–561 and 598–617; these read HKAEVDEHRL and IEAS…RKEA. Residues 584-627 are a coiled coil; the sequence is KEKEEWLLRKKRRTIEASEKEARKTAKREARKEAAAAAAKASKL. Residues 618-629 are compositionally biased toward low complexity; it reads AAAAAKASKLGK.

The protein belongs to the pescadillo family.

It is found in the nucleus. The protein resides in the nucleolus. Its subcellular location is the nucleoplasm. Its function is as follows. Required for maturation of ribosomal RNAs and formation of the large ribosomal subunit. In Drosophila erecta (Fruit fly), this protein is Pescadillo homolog.